The sequence spans 238 residues: Uridylate kinase (238 aa).

12 to 15 (KLSG) contacts ATP. The interval 20–25 (GEKGFG) is involved in allosteric activation by GTP. Gly-54 provides a ligand contact to UMP. Gly-55 and Arg-59 together coordinate ATP. UMP contacts are provided by residues Asp-72 and 133–140 (TGNPYFST). The ATP site is built by Tyr-166 and Asp-169.

It belongs to the UMP kinase family. As to quaternary structure, homohexamer.

The protein resides in the cytoplasm. It catalyses the reaction UMP + ATP = UDP + ADP. It participates in pyrimidine metabolism; CTP biosynthesis via de novo pathway; UDP from UMP (UMPK route): step 1/1. With respect to regulation, allosterically activated by GTP. Inhibited by UTP. In terms of biological role, catalyzes the reversible phosphorylation of UMP to UDP. This Clostridium botulinum (strain Langeland / NCTC 10281 / Type F) protein is Uridylate kinase.